Reading from the N-terminus, the 444-residue chain is GTPase Der (444 aa).

EngA-type G domains lie at 3 to 167 and 180 to 353; these read PIVA…PEAE and LRLA…AECQ. Residues 9-16, 56-60, 119-122, 186-193, 233-237, and 298-301 contribute to the GTP site; these read GRPNVGKS, DTGGM, NKVD, GRPNAGKS, DTAGV, and NKTD. The 85-residue stretch at 354–438 folds into the KH-like domain; sequence IRIGTGELNR…PVKVVCRASH (85 aa).

It belongs to the TRAFAC class TrmE-Era-EngA-EngB-Septin-like GTPase superfamily. EngA (Der) GTPase family. In terms of assembly, associates with the 50S ribosomal subunit.

In terms of biological role, GTPase that plays an essential role in the late steps of ribosome biogenesis. The sequence is that of GTPase Der from Solidesulfovibrio magneticus (strain ATCC 700980 / DSM 13731 / RS-1) (Desulfovibrio magneticus).